Here is a 226-residue protein sequence, read N- to C-terminus: Glycerol-3-phosphate acyltransferase (226 aa).

Helical transmembrane passes span 1-21 (MGFWLSLCGAVVLVAYLLGSF), 60-80 (FVLGLDCLKGVLAIALVYYLF), 102-122 (LVTLAGIAAILGHSKSIFLGF), 134-154 (ILLAMNWQVGLATFGVFAVVV), 159-178 (IVSLSSIMGAIAVSIVMVFL), and 182-197 (LPYILFGIAGGLYVIL).

This sequence belongs to the PlsY family. As to quaternary structure, probably interacts with PlsX.

The protein resides in the cell inner membrane. The enzyme catalyses an acyl phosphate + sn-glycerol 3-phosphate = a 1-acyl-sn-glycero-3-phosphate + phosphate. It functions in the pathway lipid metabolism; phospholipid metabolism. In terms of biological role, catalyzes the transfer of an acyl group from acyl-phosphate (acyl-PO(4)) to glycerol-3-phosphate (G3P) to form lysophosphatidic acid (LPA). This enzyme utilizes acyl-phosphate as fatty acyl donor, but not acyl-CoA or acyl-ACP. This Nostoc sp. (strain PCC 7120 / SAG 25.82 / UTEX 2576) protein is Glycerol-3-phosphate acyltransferase.